Here is a 236-residue protein sequence, read N- to C-terminus: Phosphoribosylaminoimidazole-succinocarboxamide synthase (236 aa).

The protein belongs to the SAICAR synthetase family.

It catalyses the reaction 5-amino-1-(5-phospho-D-ribosyl)imidazole-4-carboxylate + L-aspartate + ATP = (2S)-2-[5-amino-1-(5-phospho-beta-D-ribosyl)imidazole-4-carboxamido]succinate + ADP + phosphate + 2 H(+). It functions in the pathway purine metabolism; IMP biosynthesis via de novo pathway; 5-amino-1-(5-phospho-D-ribosyl)imidazole-4-carboxamide from 5-amino-1-(5-phospho-D-ribosyl)imidazole-4-carboxylate: step 1/2. The polypeptide is Phosphoribosylaminoimidazole-succinocarboxamide synthase (Rickettsia akari (strain Hartford)).